We begin with the raw amino-acid sequence, 59 residues long: UPF0181 protein YoaH (59 aa).

This sequence belongs to the UPF0181 family.

The protein is UPF0181 protein YoaH of Shigella sonnei (strain Ss046).